Consider the following 86-residue polypeptide: Kappa-theraphotoxin-Cg1a 1 (86 aa).

An N-terminal signal peptide occupies residues 1–21 (MKVSVLITLAVLGVMFVWASA). Positions 22–50 (AELEERGSDQRDSPAWLKSMERIFQSGER) are excised as a propeptide. Disulfide bonds link C52/C66, C59/C71, and C65/C78. An involved in active face region spans residues 55 to 56 (MF). F84 bears the Phenylalanine amide mark.

It belongs to the neurotoxin 10 (Hwtx-1) family. 28 (Jztx-11) subfamily. In terms of tissue distribution, expressed by the venom gland.

The protein resides in the secreted. This toxin acts as a voltage-dependent gating-modifier. It inhibits the sodium conductance (IC(50)=124 nM) and slows the fast inactivation (EC(50)=1180 nM) of Nav1.5/SCN5A. It significantly shifts the activation to more depolarized voltages and decreases the deactivation of Nav1.5 currents upon extreme depolarization, but only slightly affects voltage-dependence of steady-state inactivation. In addition, this toxin causes an approximately five-fold decrease in the rate of recovery from inactivation and an approximately 1.9-fold reduction in the closed-state inactivation rate. This toxin integrates the functions of site 3 toxins (alpha-scorpion toxins) with site 4 toxins (beta-scorpion and spider toxins) by targeting multiple sites on Nav1.5. Also shows inhibition of voltage-gated potassium channels (5 uM completely inhibits Kv2.1/KCNB1, whereas 5 uM moderately inhibits Kv4.2/KCND2 Kv4.1/KCND1 channels). The chain is Kappa-theraphotoxin-Cg1a 1 from Chilobrachys guangxiensis (Chinese earth tiger tarantula).